A 557-amino-acid chain; its full sequence is Venom carboxylesterase-6 (557 aa).

Positions 1 to 21 (MYMLKLSYILLFLGFVKFSWQ) are cleaved as a signal peptide. A disulfide bridge links C88 with C108. An N-linked (GlcNAc...) asparagine glycan is attached at N145. The Acyl-ester intermediate role is filled by S212. C264 and C275 form a disulfide bridge. E341 acts as the Charge relay system in catalysis. An N-linked (GlcNAc...) asparagine glycan is attached at N374. H464 serves as the catalytic Charge relay system. Residues N478, N528, and N542 are each glycosylated (N-linked (GlcNAc...) asparagine).

It belongs to the type-B carboxylesterase/lipase family. Expressed by the venom gland.

The protein localises to the secreted. The enzyme catalyses a carboxylic ester + H2O = an alcohol + a carboxylate + H(+). This chain is Venom carboxylesterase-6, found in Apis mellifera (Honeybee).